A 463-amino-acid polypeptide reads, in one-letter code: Glycine--tRNA ligase (463 aa).

Residues arginine 98 and glutamate 174 each coordinate substrate. Residues arginine 206–glutamate 208, phenylalanine 216–phenylalanine 221, glutamate 290–leucine 291, and glycine 334–arginine 337 each bind ATP. Phenylalanine 221–glutamate 225 is a binding site for substrate. Glutamate 330–glycine 334 is a binding site for substrate.

This sequence belongs to the class-II aminoacyl-tRNA synthetase family. Homodimer.

The protein resides in the cytoplasm. The enzyme catalyses tRNA(Gly) + glycine + ATP = glycyl-tRNA(Gly) + AMP + diphosphate. Functionally, catalyzes the attachment of glycine to tRNA(Gly). This chain is Glycine--tRNA ligase, found in Staphylococcus haemolyticus (strain JCSC1435).